A 65-amino-acid polypeptide reads, in one-letter code: MGVKKEKGRKRFRKRKTYGNQILPLELLIEKNKREIINSAELMEEIYMKIDEKHTQCVTKYKKTR.

Residues 11–31 (RFRKRKTYGNQILPLELLIEK) constitute a DNA-binding region (H-T-H motif).

This sequence to B.natto SenN.

Functionally, regulates the expression of extracellular-protein genes of Bacillus subtilis. The polypeptide is Transcriptional regulatory protein SenS (senS) (Bacillus subtilis (strain 168)).